Reading from the N-terminus, the 206-residue chain is KH domain-containing protein 3 (206 aa).

The tract at residues 1–40 (MDTPRRFPTLVQLMQPKAMPVEVLGHLPKRFSWFHSEFLK) is involved in RNA binding. The 64-residue stretch at 40–103 (KNPKVVRLEV…SYQEDTIKMI (64 aa)) folds into the KH; atypical domain. A compositionally biased stretch (basic and acidic residues) spans 144–153 (GTQRSVEVRE). A disordered region spans residues 144-206 (GTQRSVEVRE…EDTRAPVTRL (63 aa)). T145 carries the post-translational modification Phosphothreonine. Positions 166 to 183 (TGTQQSLEAANQSGTQRS) are enriched in polar residues. Residue S171 is modified to Phosphoserine.

It belongs to the KHDC1 family. Component of the subcortical maternal complex (SCMC), at least composed of NLRP5, KHDC3L, OOEP, and TLE6. Within the complex, interacts with NLRP5, KHDC3L and TLE6. The SCMC may facilitate translocation of its components between the nuclear and cytoplasmic compartments. Forms a scaffold complex with OOEP/FLOPED, and interacts with BLM and TRIM25 at DNA replication forks. Interacts with PARP1; the interaction is increased following the formation of DNA double-strand breaks. Interacts with NUMA1.

It is found in the cytoplasm. Its subcellular location is the cell cortex. The protein localises to the nucleus. It localises to the mitochondrion. The protein resides in the cytoskeleton. It is found in the microtubule organizing center. Its subcellular location is the centrosome. The protein localises to the chromosome. In terms of biological role, component of the subcortical maternal complex (SCMC), a multiprotein complex that plays a key role in early embryonic development. The SCMC complex is a structural constituent of cytoplasmic lattices, which consist in fibrous structures found in the cytoplasm of oocytes and preimplantation embryos. They are required to store maternal proteins critical for embryonic development, such as proteins that control epigenetic reprogramming of the preimplantation embryo, and prevent their degradation or activation. KHDC3 ensures proper spindle assembly by regulating the localization of AURKA via RHOA signaling and of PLK1 via a RHOA-independent process. Required for the localization of MAD2L1 to kinetochores to enable spindle assembly checkpoint function. As part of the OOEP-KHDC3 scaffold, recruits BLM and TRIM25 to DNA replication forks, thereby promoting the ubiquitination of BLM by TRIM25, enhancing BLM retainment at replication forks and therefore promoting stalled replication fork restart. Regulates homologous recombination-mediated DNA repair via recruitment of RAD51 to sites of DNA double-strand breaks, and sustainment of PARP1 activity, which in turn modulates downstream ATM or ATR activation. Activation of ATM or ATR in response to DNA double-strand breaks may be cell-type specific. Its role in DNA double-strand break repair is independent of its role in restarting stalled replication forks. Promotes neural stem cell neurogenesis and neuronal differentiation in the hippocampus. May regulate normal development of learning, memory and anxiety. Capable of binding RNA. The chain is KH domain-containing protein 3 (KHDC3L) from Macaca mulatta (Rhesus macaque).